The sequence spans 278 residues: Cytoplasmic envelopment protein 1 (278 aa).

Belongs to the herpesviridae cytoplasmic envelopment protein 1 family. As to quaternary structure, interacts with BSRF1 tegument protein; the BBRF2-BSRF1 complexes oligomerize and might play a role in tethering the viral nucleocapsids to the host Golgi membrane during secondary envelopment.

It localises to the virion. It is found in the virion tegument. The protein localises to the host cytoplasm. Its subcellular location is the host Golgi apparatus. Its function is as follows. Plays a critical role in cytoplasmic virus egress. Participates in the final step of tegumentation and envelope acquisition within the host cytoplasm. The sequence is that of Cytoplasmic envelopment protein 1 from Homo sapiens (Human).